The following is a 440-amino-acid chain: 2-phosphinomethylmalate synthase (440 aa).

In terms of domain architecture, Pyruvate carboxyltransferase spans 39–313 (VWLSETTHRD…GARVNLPAVN (275 aa)).

This sequence belongs to the alpha-IPM synthase/homocitrate synthase family. Homodimer. Mn(2+) serves as cofactor. Requires Co(2+) as cofactor.

It catalyses the reaction 3-(hydrohydroxyphosphoryl)pyruvate + acetyl-CoA + H2O = phosphinomethylmalate + CoA + H(+). It participates in secondary metabolite biosynthesis; bialaphos biosynthesis. With respect to regulation, strongly inhibited by p-chloromercuribenzoate (pCMB), iodoacetamide (IA) and EDTA. In terms of biological role, involved in the biosynthesis of phosphinothricin tripeptide (PTT), also known as bialaphos (BA), a natural-product antibiotic and potent herbicide. Catalyzes the condensation berween phosphinopyruvic acid (PPA), an analog of oxalacetic acid, and acetyl-CoA to form R-2-phosphinomethylmalic acid (PMM). Can also act on oxaloacetate, but shows no activity when acetyl-CoA is substituted by propionyl-CoA or butyryl-CoA. The protein is 2-phosphinomethylmalate synthase of Streptomyces hygroscopicus.